We begin with the raw amino-acid sequence, 398 residues long: O-methyltransferase mpaG (398 aa).

D264 provides a ligand contact to S-adenosyl-L-methionine. Catalysis depends on H306, which acts as the Proton acceptor. Active-site residues include E335 and E362.

Belongs to the class I-like SAM-binding methyltransferase superfamily. Cation-independent O-methyltransferase family. COMT subfamily.

The protein localises to the cytoplasm. It localises to the cytosol. It carries out the reaction (4E,8E)-10-(4,6-dihydroxy-7-methyl-3-oxo-1,3-dihydro-2-benzofuran-5-yl)-4,8-dimethyldeca-4,8-dienoate + S-adenosyl-L-methionine = (4E,8E)-10-(4-hydroxy-6-methoxy-7-methyl-3-oxo-1,3-dihydro-2-benzofuran-5-yl)-4,8-dimethyldeca-4,8-dienoate + S-adenosyl-L-homocysteine + H(+). The protein operates within secondary metabolite biosynthesis; terpenoid biosynthesis. Its function is as follows. O-methyltransferase; part of the gene cluster that mediates the biosynthesis of mycophenolic acid (MPA), the first isolated antibiotic natural product in the world obtained from a culture of Penicillium brevicompactum in 1893. MpaC methylates farnesyl-DHMP-3C (FDHMP-3C) to yield MFDHMP-3C. The first step of the pathway is the synthesis of 5-methylorsellinic acid (5MOA) by the cytosolic polyketide synthase mpaC. 5MOA is then converted to the phthalide compound 5,7-dihydroxy-4,6-dimethylphthalide (DHMP) by the endoplasmic reticulum-bound cytochrome P450 monooxygenase mpaDE. MpaDE first catalyzes hydroxylation of 5-MOA to 4,6-dihydroxy-2-(hydroxymethyl)-3-methylbenzoic acid (DHMB). MpaDE then acts as a lactone synthase that catalyzes the ring closure to convert DHMB into DHMP. The next step is the prenylation of DHMP by the Golgi apparatus-associated prenyltransferase mpaA to yield farnesyl-DHMP (FDHMP). The ER-bound oxygenase mpaB then mediates the oxidative cleavage the C19-C20 double bond in FDHMP to yield FDHMP-3C via a mycophenolic aldehyde intermediate. The O-methyltransferase mpaG catalyzes the methylation of FDHMP-3C to yield MFDHMP-3C. After the cytosolic methylation of FDHMP-3C, MFDHMP-3C enters into peroxisomes probably via free diffusion due to its low molecular weight. Upon a peroxisomal CoA ligation reaction, catalyzed by a beta-oxidation component enzyme acyl-CoA ligase ACL891, MFDHMP-3C-CoA would then be restricted to peroxisomes for the following beta-oxidation pathway steps. The peroxisomal beta-oxidation machinery than converts MFDHMP-3C-CoA into MPA_CoA, via a beta-oxidation chain-shortening process. Finally mpaH acts as a peroxisomal acyl-CoA hydrolase with high substrate specificity toward MPA-CoA to release the final product MPA. This is O-methyltransferase mpaG from Penicillium roqueforti (strain FM164).